Here is a 413-residue protein sequence, read N- to C-terminus: Arginine biosynthesis bifunctional protein ArgJ (413 aa).

Substrate-binding residues include Thr158, Lys184, Thr195, Glu285, Asn408, and Ser413. Residue Thr195 is the Nucleophile of the active site.

The protein belongs to the ArgJ family. In terms of assembly, heterotetramer of two alpha and two beta chains.

The protein resides in the cytoplasm. The enzyme catalyses N(2)-acetyl-L-ornithine + L-glutamate = N-acetyl-L-glutamate + L-ornithine. It carries out the reaction L-glutamate + acetyl-CoA = N-acetyl-L-glutamate + CoA + H(+). It functions in the pathway amino-acid biosynthesis; L-arginine biosynthesis; L-ornithine and N-acetyl-L-glutamate from L-glutamate and N(2)-acetyl-L-ornithine (cyclic): step 1/1. It participates in amino-acid biosynthesis; L-arginine biosynthesis; N(2)-acetyl-L-ornithine from L-glutamate: step 1/4. Its function is as follows. Catalyzes two activities which are involved in the cyclic version of arginine biosynthesis: the synthesis of N-acetylglutamate from glutamate and acetyl-CoA as the acetyl donor, and of ornithine by transacetylation between N(2)-acetylornithine and glutamate. This Brucella suis biovar 1 (strain 1330) protein is Arginine biosynthesis bifunctional protein ArgJ.